The primary structure comprises 373 residues: Dual-specificity RNA methyltransferase RlmN (373 aa).

Glu-91 functions as the Proton acceptor in the catalytic mechanism. In terms of domain architecture, Radical SAM core spans 97–339 (EDDRGTLCIS…TTVRKTRGDD (243 aa)). Cys-104 and Cys-344 are disulfide-bonded. Positions 111, 115, and 118 each coordinate [4Fe-4S] cluster. Residues 165–166 (GE), Ser-197, 219–221 (SLH), and Asn-301 each bind S-adenosyl-L-methionine. Catalysis depends on Cys-344, which acts as the S-methylcysteine intermediate.

This sequence belongs to the radical SAM superfamily. RlmN family. Requires [4Fe-4S] cluster as cofactor.

The protein localises to the cytoplasm. It carries out the reaction adenosine(2503) in 23S rRNA + 2 reduced [2Fe-2S]-[ferredoxin] + 2 S-adenosyl-L-methionine = 2-methyladenosine(2503) in 23S rRNA + 5'-deoxyadenosine + L-methionine + 2 oxidized [2Fe-2S]-[ferredoxin] + S-adenosyl-L-homocysteine. The catalysed reaction is adenosine(37) in tRNA + 2 reduced [2Fe-2S]-[ferredoxin] + 2 S-adenosyl-L-methionine = 2-methyladenosine(37) in tRNA + 5'-deoxyadenosine + L-methionine + 2 oxidized [2Fe-2S]-[ferredoxin] + S-adenosyl-L-homocysteine. Functionally, specifically methylates position 2 of adenine 2503 in 23S rRNA and position 2 of adenine 37 in tRNAs. m2A2503 modification seems to play a crucial role in the proofreading step occurring at the peptidyl transferase center and thus would serve to optimize ribosomal fidelity. This is Dual-specificity RNA methyltransferase RlmN from Paracidovorax citrulli (strain AAC00-1) (Acidovorax citrulli).